A 206-amino-acid polypeptide reads, in one-letter code: Large ribosomal subunit protein uL4 (206 aa).

The segment at R44–T77 is disordered. Over residues V56–G70 the composition is skewed to basic residues.

The protein belongs to the universal ribosomal protein uL4 family. Part of the 50S ribosomal subunit.

Functionally, one of the primary rRNA binding proteins, this protein initially binds near the 5'-end of the 23S rRNA. It is important during the early stages of 50S assembly. It makes multiple contacts with different domains of the 23S rRNA in the assembled 50S subunit and ribosome. Forms part of the polypeptide exit tunnel. The protein is Large ribosomal subunit protein uL4 of Methylibium petroleiphilum (strain ATCC BAA-1232 / LMG 22953 / PM1).